The sequence spans 273 residues: Tyrosinase (273 aa).

Residues 1–18 (MLLFTMGLLLAILQPSTG) form the signal peptide. Asn86, Asn111, and Asn161 each carry an N-linked (GlcNAc...) asparagine glycan. Positions 180, 202, and 211 each coordinate Cu cation. The N-linked (GlcNAc...) asparagine glycan is linked to Asn230.

This sequence belongs to the tyrosinase family. The cofactor is Cu(2+).

Its subcellular location is the melanosome membrane. The protein resides in the melanosome. The enzyme catalyses 2 L-dopa + O2 = 2 L-dopaquinone + 2 H2O. The catalysed reaction is L-tyrosine + O2 = L-dopaquinone + H2O. This is a copper-containing oxidase that functions in the formation of pigments such as melanins and other polyphenolic compounds. Catalyzes the initial and rate limiting step in the cascade of reactions leading to melanin production from tyrosine. In addition to hydroxylating tyrosine to DOPA (3,4-dihydroxyphenylalanine), also catalyzes the oxidation of DOPA to DOPA-quinone, and possibly the oxidation of DHI (5,6-dihydroxyindole) to indole-5,6 quinone. The polypeptide is Tyrosinase (TYR) (Coturnix japonica (Japanese quail)).